Consider the following 170-residue polypeptide: tRNA-splicing endonuclease (170 aa).

Residues tyrosine 106, histidine 116, and lysine 147 contribute to the active site.

Belongs to the tRNA-intron endonuclease family. Archaeal short subfamily. In terms of assembly, homotetramer; although the tetramer contains four active sites, only two participate in the cleavage. Therefore, it should be considered as a dimer of dimers.

The catalysed reaction is pretRNA = a 3'-half-tRNA molecule with a 5'-OH end + a 5'-half-tRNA molecule with a 2',3'-cyclic phosphate end + an intron with a 2',3'-cyclic phosphate and a 5'-hydroxyl terminus.. Its function is as follows. Endonuclease that removes tRNA introns. Cleaves pre-tRNA at the 5'- and 3'-splice sites to release the intron. The products are an intron and two tRNA half-molecules bearing 2',3' cyclic phosphate and 5'-OH termini. Recognizes a pseudosymmetric substrate in which 2 bulged loops of 3 bases are separated by a stem of 4 bp. The polypeptide is tRNA-splicing endonuclease (Methanothermobacter thermautotrophicus (strain ATCC 29096 / DSM 1053 / JCM 10044 / NBRC 100330 / Delta H) (Methanobacterium thermoautotrophicum)).